Reading from the N-terminus, the 211-residue chain is Orotidine 5'-phosphate decarboxylase (211 aa).

Substrate contacts are provided by residues aspartate 7, lysine 29, 57–66, serine 109, 162–172, glycine 185, and arginine 186; these read DLKLADIPNT and PGIGAQGGSPV. Lysine 59 functions as the Proton donor in the catalytic mechanism.

Belongs to the OMP decarboxylase family. Type 1 subfamily. In terms of assembly, homodimer.

The catalysed reaction is orotidine 5'-phosphate + H(+) = UMP + CO2. It functions in the pathway pyrimidine metabolism; UMP biosynthesis via de novo pathway; UMP from orotate: step 2/2. Catalyzes the decarboxylation of orotidine 5'-monophosphate (OMP) to uridine 5'-monophosphate (UMP). The chain is Orotidine 5'-phosphate decarboxylase from Pyrococcus furiosus (strain ATCC 43587 / DSM 3638 / JCM 8422 / Vc1).